The following is a 436-amino-acid chain: ATP-dependent protease ATPase subunit HslU (436 aa).

ATP contacts are provided by residues valine 18, 60 to 65, aspartate 249, glutamate 314, and arginine 386; that span reads GVGKTE.

This sequence belongs to the ClpX chaperone family. HslU subfamily. As to quaternary structure, a double ring-shaped homohexamer of HslV is capped on each side by a ring-shaped HslU homohexamer. The assembly of the HslU/HslV complex is dependent on binding of ATP.

It is found in the cytoplasm. ATPase subunit of a proteasome-like degradation complex; this subunit has chaperone activity. The binding of ATP and its subsequent hydrolysis by HslU are essential for unfolding of protein substrates subsequently hydrolyzed by HslV. HslU recognizes the N-terminal part of its protein substrates and unfolds these before they are guided to HslV for hydrolysis. In Rhizobium rhizogenes (strain K84 / ATCC BAA-868) (Agrobacterium radiobacter), this protein is ATP-dependent protease ATPase subunit HslU.